A 295-amino-acid chain; its full sequence is NAD kinase (295 aa).

Asp72 serves as the catalytic Proton acceptor. Residues 72–73, 146–147, Arg157, Lys174, Asp176, 187–192, and Gln247 each bind NAD(+); these read DG, ND, and TAYALS.

This sequence belongs to the NAD kinase family. It depends on a divalent metal cation as a cofactor.

It localises to the cytoplasm. The catalysed reaction is NAD(+) + ATP = ADP + NADP(+) + H(+). In terms of biological role, involved in the regulation of the intracellular balance of NAD and NADP, and is a key enzyme in the biosynthesis of NADP. Catalyzes specifically the phosphorylation on 2'-hydroxyl of the adenosine moiety of NAD to yield NADP. In Azotobacter vinelandii (strain DJ / ATCC BAA-1303), this protein is NAD kinase.